Here is a 549-residue protein sequence, read N- to C-terminus: Chaperonin GroEL (549 aa).

ATP contacts are provided by residues 30 to 33 (TLGP), K51, 87 to 91 (DGTTT), G415, 479 to 481 (NAA), and D495.

The protein belongs to the chaperonin (HSP60) family. In terms of assembly, forms a cylinder of 14 subunits composed of two heptameric rings stacked back-to-back. Interacts with the co-chaperonin GroES.

It localises to the cytoplasm. The catalysed reaction is ATP + H2O + a folded polypeptide = ADP + phosphate + an unfolded polypeptide.. Functionally, together with its co-chaperonin GroES, plays an essential role in assisting protein folding. The GroEL-GroES system forms a nano-cage that allows encapsulation of the non-native substrate proteins and provides a physical environment optimized to promote and accelerate protein folding. The protein is Chaperonin GroEL of Leptothrix cholodnii (strain ATCC 51168 / LMG 8142 / SP-6) (Leptothrix discophora (strain SP-6)).